The primary structure comprises 249 residues: Proteasome subunit alpha type-7 (249 aa).

This sequence belongs to the peptidase T1A family. The 26S proteasome consists of a 20S proteasome core and two 19S regulatory subunits. The 20S proteasome core is composed of 28 subunits that are arranged in four stacked rings, resulting in a barrel-shaped structure. The two end rings are each formed by seven alpha subunits, and the two central rings are each formed by seven beta subunits. The catalytic chamber with the active sites is on the inside of the barrel.

The protein resides in the cytoplasm. Its subcellular location is the nucleus. Functionally, the proteasome is a multicatalytic proteinase complex which is characterized by its ability to cleave peptides with Arg, Phe, Tyr, Leu, and Glu adjacent to the leaving group at neutral or slightly basic pH. The proteasome has an ATP-dependent proteolytic activity. The sequence is that of Proteasome subunit alpha type-7 (PAD1) from Cicer arietinum (Chickpea).